The chain runs to 968 residues: C-1-tetrahydrofolate synthase, cytoplasmic (968 aa).

A methylenetetrahydrofolate dehydrogenase and cyclohydrolase region spans residues 1 to 338 (MSAQYQRFLK…ERLAKSQWAL (338 aa)). Substrate is bound by residues 86–90 (YIRMK) and 133–135 (VQM). NADP(+)-binding positions include 205–207 (GRS) and Ser-230. 305–309 (PGGVG) serves as a coordination point for substrate. Positions 339-968 (QTLPLKPQRP…TETGEIEGLF (630 aa)) are formyltetrahydrofolate synthetase. 413–420 (TPLGEGKT) lines the ATP pocket.

The protein in the N-terminal section; belongs to the tetrahydrofolate dehydrogenase/cyclohydrolase family. In the C-terminal section; belongs to the formate--tetrahydrofolate ligase family. Homodimer. As to expression, present in all tissues.

It localises to the cytoplasm. It carries out the reaction (6R)-5,10-methylene-5,6,7,8-tetrahydrofolate + NADP(+) = (6R)-5,10-methenyltetrahydrofolate + NADPH. The catalysed reaction is (6R)-5,10-methenyltetrahydrofolate + H2O = (6R)-10-formyltetrahydrofolate + H(+). It catalyses the reaction (6S)-5,6,7,8-tetrahydrofolate + formate + ATP = (6R)-10-formyltetrahydrofolate + ADP + phosphate. Its pathway is one-carbon metabolism; tetrahydrofolate interconversion. This is C-1-tetrahydrofolate synthase, cytoplasmic (pug) from Drosophila melanogaster (Fruit fly).